The primary structure comprises 220 residues: A-type ATP synthase subunit K (220 aa).

6 consecutive transmembrane segments (helical) span residues 5–25 (LILG…GSGI), 63–83 (FLVA…AMFA), 90–110 (LAGL…GAVA), 125–145 (LPET…VGVF), 155–175 (AALG…GQGI), and 195–215 (LVLA…AILI).

Belongs to the V-ATPase proteolipid subunit family. The A-type ATPase is composed of subunits A(3), B(3), C, D, E(1 or 2), F, H(2), I and K(x). Subunit K dimerizes and may form higher oligomers.

It localises to the cell membrane. In terms of biological role, component of the A-type ATP synthase that produces ATP from ADP in the presence of a proton gradient across the membrane. The sequence is that of A-type ATP synthase subunit K from Methanocaldococcus jannaschii (strain ATCC 43067 / DSM 2661 / JAL-1 / JCM 10045 / NBRC 100440) (Methanococcus jannaschii).